The chain runs to 562 residues: Formate--tetrahydrofolate ligase (562 aa).

Residue 77–84 participates in ATP binding; the sequence is TPAGEGKS.

Belongs to the formate--tetrahydrofolate ligase family.

The catalysed reaction is (6S)-5,6,7,8-tetrahydrofolate + formate + ATP = (6R)-10-formyltetrahydrofolate + ADP + phosphate. The protein operates within one-carbon metabolism; tetrahydrofolate interconversion. This is Formate--tetrahydrofolate ligase from Corynebacterium jeikeium (strain K411).